We begin with the raw amino-acid sequence, 245 residues long: DNA repair protein RecO (245 aa).

It belongs to the RecO family.

Involved in DNA repair and RecF pathway recombination. The sequence is that of DNA repair protein RecO from Anaplasma phagocytophilum (strain HZ).